A 236-amino-acid polypeptide reads, in one-letter code: Probable transcriptional activator protein TraR (236 aa).

An HTH luxR-type domain is found at 169–234 (VLNPKQMLSP…QLVAIAKDRG (66 aa)). Residues 193 to 212 (ASVTANLTGINARTVQHYLD) constitute a DNA-binding region (H-T-H motif).

The protein belongs to the autoinducer-regulated transcriptional regulatory protein family.

Positive regulation of conjugal transfer. TraR activates target genes in the presence of AAI and also activates traR and traI themselves. The sequence is that of Probable transcriptional activator protein TraR (traR) from Sinorhizobium fredii (strain NBRC 101917 / NGR234).